The following is a 382-amino-acid chain: uncharacterized protein (382 aa).

The next 10 helical transmembrane spans lie at 8–28 (VLLLLCGLLLFTISIAVLNTL), 41–61 (WQVGMVSSSYFTGNLVGTLIA), 73–93 (SYHCSCILFALATCGLMLTVD), 94–114 (FWSWLGWRFLAGIACALIWVI), 133–153 (AAYMMVYYLGTVIGQLLLGIV), 157–177 (LLSVIPWVGALVITAMLPLLF), 208–228 (GCIISGVLLGSLYGLLPLYLS), 274–294 (VVILGSVAILGNYAMAPALFI), 325–345 (ALLMSYTLGSLAGPTMTSLLM), and 349–369 (SDNLLFIMIAGVAFVYLMMLL).

This sequence belongs to the major facilitator superfamily. YcaD (TC 2.A.1.26) family.

The protein localises to the cell inner membrane. This is an uncharacterized protein from Yersinia pseudotuberculosis serotype O:3 (strain YPIII).